The chain runs to 99 residues: Aspartyl/glutamyl-tRNA(Asn/Gln) amidotransferase subunit C (99 aa).

Belongs to the GatC family. Heterotrimer of A, B and C subunits.

The enzyme catalyses L-glutamyl-tRNA(Gln) + L-glutamine + ATP + H2O = L-glutaminyl-tRNA(Gln) + L-glutamate + ADP + phosphate + H(+). It catalyses the reaction L-aspartyl-tRNA(Asn) + L-glutamine + ATP + H2O = L-asparaginyl-tRNA(Asn) + L-glutamate + ADP + phosphate + 2 H(+). Functionally, allows the formation of correctly charged Asn-tRNA(Asn) or Gln-tRNA(Gln) through the transamidation of misacylated Asp-tRNA(Asn) or Glu-tRNA(Gln) in organisms which lack either or both of asparaginyl-tRNA or glutaminyl-tRNA synthetases. The reaction takes place in the presence of glutamine and ATP through an activated phospho-Asp-tRNA(Asn) or phospho-Glu-tRNA(Gln). The protein is Aspartyl/glutamyl-tRNA(Asn/Gln) amidotransferase subunit C of Corynebacterium glutamicum (strain R).